We begin with the raw amino-acid sequence, 350 residues long: Phenylalanine--tRNA ligase alpha subunit (350 aa).

E259 serves as a coordination point for Mg(2+).

Belongs to the class-II aminoacyl-tRNA synthetase family. Phe-tRNA synthetase alpha subunit type 1 subfamily. Tetramer of two alpha and two beta subunits. Mg(2+) is required as a cofactor.

The protein localises to the cytoplasm. The enzyme catalyses tRNA(Phe) + L-phenylalanine + ATP = L-phenylalanyl-tRNA(Phe) + AMP + diphosphate + H(+). The protein is Phenylalanine--tRNA ligase alpha subunit of Rickettsia typhi (strain ATCC VR-144 / Wilmington).